We begin with the raw amino-acid sequence, 845 residues long: ABC transporter A family member 9 (845 aa).

Transmembrane regions (helical) follow at residues 33-53, 192-212, 235-255, 292-312, 318-338, 347-367, and 417-437; these read CVQI…NFWV, AFVA…FLGG, IASL…MPLF, IYFI…FAVF, FAMF…SFFL, AASI…SILS, and SKII…ALYL. An ABC transporter domain is found at 531 to 762; the sequence is VIIEGLTKHY…FGDGYSVRIN (232 aa). 565–572 lines the ATP pocket; it reads GANGAGKT.

Belongs to the ABC transporter superfamily. ABCA family.

Its subcellular location is the membrane. The sequence is that of ABC transporter A family member 9 (abcA9) from Dictyostelium discoideum (Social amoeba).